Consider the following 434-residue polypeptide: Serine--tRNA ligase (434 aa).

Position 239–241 (239–241) interacts with L-serine; the sequence is TAE. 270-272 lines the ATP pocket; the sequence is RSE. An L-serine-binding site is contributed by E293. ATP is bound at residue 357–360; that stretch reads EISS. S392 lines the L-serine pocket.

Belongs to the class-II aminoacyl-tRNA synthetase family. Type-1 seryl-tRNA synthetase subfamily. As to quaternary structure, homodimer. The tRNA molecule binds across the dimer.

It localises to the cytoplasm. It carries out the reaction tRNA(Ser) + L-serine + ATP = L-seryl-tRNA(Ser) + AMP + diphosphate + H(+). The catalysed reaction is tRNA(Sec) + L-serine + ATP = L-seryl-tRNA(Sec) + AMP + diphosphate + H(+). It participates in aminoacyl-tRNA biosynthesis; selenocysteinyl-tRNA(Sec) biosynthesis; L-seryl-tRNA(Sec) from L-serine and tRNA(Sec): step 1/1. Its function is as follows. Catalyzes the attachment of serine to tRNA(Ser). Is also able to aminoacylate tRNA(Sec) with serine, to form the misacylated tRNA L-seryl-tRNA(Sec), which will be further converted into selenocysteinyl-tRNA(Sec). This Cupriavidus taiwanensis (strain DSM 17343 / BCRC 17206 / CCUG 44338 / CIP 107171 / LMG 19424 / R1) (Ralstonia taiwanensis (strain LMG 19424)) protein is Serine--tRNA ligase.